We begin with the raw amino-acid sequence, 197 residues long: ATP-dependent Clp protease proteolytic subunit (197 aa).

The active-site Nucleophile is the S100. H125 is a catalytic residue.

This sequence belongs to the peptidase S14 family. As to quaternary structure, component of the chloroplastic Clp protease core complex.

The protein resides in the plastid. It localises to the chloroplast stroma. It catalyses the reaction Hydrolysis of proteins to small peptides in the presence of ATP and magnesium. alpha-casein is the usual test substrate. In the absence of ATP, only oligopeptides shorter than five residues are hydrolyzed (such as succinyl-Leu-Tyr-|-NHMec, and Leu-Tyr-Leu-|-Tyr-Trp, in which cleavage of the -Tyr-|-Leu- and -Tyr-|-Trp bonds also occurs).. Its function is as follows. Cleaves peptides in various proteins in a process that requires ATP hydrolysis. Has a chymotrypsin-like activity. Plays a major role in the degradation of misfolded proteins. This Angiopteris evecta (Mule's foot fern) protein is ATP-dependent Clp protease proteolytic subunit.